A 44-amino-acid polypeptide reads, in one-letter code: uncharacterized protein (44 aa).

Residues 1–16 (MRISLLAVILALLFVA) form the signal peptide.

This is an uncharacterized protein from Helicobacter pylori (strain ATCC 700392 / 26695) (Campylobacter pylori).